We begin with the raw amino-acid sequence, 271 residues long: MTIQDDMVGKHPIENDFWKWLQHEDTESSDLKRHRYLEVDSSNRDEAIKSVAAWLIKYHLSEGKKRVIRKKQEILEKHDFAEYAQSLHVFPKSDKTQKGNLGEIFLSEYLSQTSGVQILVYKLHYNPNIDQSMKGDDVLLVNPDKVLLGESKFRSTPNKRAVEEASELMKDKLTLPMSLGFIADRLFEQGKDELGEVIFDLQFKMSSIEIDIKNIGFLLSTKKVRSIVENNLSSPNSDFIFISLGMDDPAAFLKSVFDYAESNLLEGSYET.

Component of antiviral defense system Hachiman, composed of HamA and HamB. Expression of Hachiman in B.subtilis (strain BEST7003) confers resistance to phages phi105, phi29, phi3T, rho14, SBSphiJ, SpBeta and SPR. This Bacillus cereus protein is Hachiman protein HamA.